Reading from the N-terminus, the 430-residue chain is Adenylosuccinate synthetase (430 aa).

GTP-binding positions include 12-18 (GDEGKGK) and 40-42 (GHT). Residue Asp13 is the Proton acceptor of the active site. Residues Asp13 and Gly40 each coordinate Mg(2+). IMP contacts are provided by residues 13 to 16 (DEGK), 38 to 41 (NAGH), Thr130, Arg144, Gln224, Thr239, and Arg303. His41 acts as the Proton donor in catalysis. 299–305 (VNTGRKR) serves as a coordination point for substrate. Residues Arg305, 331-333 (KLD), and 413-415 (STS) each bind GTP.

This sequence belongs to the adenylosuccinate synthetase family. As to quaternary structure, homodimer. Requires Mg(2+) as cofactor.

It localises to the cytoplasm. The catalysed reaction is IMP + L-aspartate + GTP = N(6)-(1,2-dicarboxyethyl)-AMP + GDP + phosphate + 2 H(+). It participates in purine metabolism; AMP biosynthesis via de novo pathway; AMP from IMP: step 1/2. In terms of biological role, plays an important role in the de novo pathway of purine nucleotide biosynthesis. Catalyzes the first committed step in the biosynthesis of AMP from IMP. The sequence is that of Adenylosuccinate synthetase from Rhodopseudomonas palustris (strain ATCC BAA-98 / CGA009).